The chain runs to 57 residues: Large ribosomal subunit protein bL32A (57 aa).

It belongs to the bacterial ribosomal protein bL32 family.

This is Large ribosomal subunit protein bL32A (rpmF1) from Streptomyces coelicolor (strain ATCC BAA-471 / A3(2) / M145).